Here is a 581-residue protein sequence, read N- to C-terminus: MVFRNVGRPPEEEDVEAAPEPGPSELLCPRHRCALDPKALPPGLALERTWGPAAGLEAQLAALGLGQPAGPGVKTVGGGCCPCPCPPQPPPPQPQPPAAAPQAGEDPTETSDALLVLEGLESEAESLETNSCSEEELSSPGRGGGGGGRLLLQPPGPELPPVPFPLQDLVPLGRLSRGEQQQQQQQQPPPPPPPPGPLRPLAGPSRKGSFKIRLSRLFRTKSCNGGSGGGDGTGKRPSGELAASAASLTDMGGSAGRELDAGRKPKLTRTQSAFSPVSFSPLFTGETVSLVDVDISQRGLTSPHPPTPPPPPRRSLSLLDDISGTLPTSVLVAPMGSSLQSFPLPPPPPPHAPDAFPRIAPIRAAESLHSQPPQHLQCPLYRPDSSSFAASLRELEKCGWYWGPMNWEDAEMKLKGKPDGSFLVRDSSDPRYILSLSFRSQGITHHTRMEHYRGTFSLWCHPKFEDRCQSVVEFIKRAIMHSKNGKFLYFLRSRVPGLPPTPVQLLYPVSRFSNVKSLQHLCRFRIRQLVRIDHIPDLPLPKPLISYIRKFYYYDPQEEVYLSLKEAQLISKQKQEVEPST.

Disordered stretches follow at residues 1-23 (MVFR…EPGP), 89-109 (PPPP…DPTE), 123-272 (EAES…RTQS), and 297-316 (QRGL…RRSL). Composition is skewed to pro residues over residues 89–99 (PPPPQPQPPAA), 154–164 (PPGPELPPVPF), and 187–198 (QPPPPPPPPGPL). The interval 124–494 (AESLETNSCS…GKFLYFLRSR (371 aa)) is mediates interaction with SORBS3. A compositionally biased stretch (basic residues) spans 208–219 (GSFKIRLSRLFR). A compositionally biased stretch (pro residues) spans 303–313 (PHPPTPPPPPR). In terms of domain architecture, SH2 spans 400 to 509 (WYWGPMNWED…PTPVQLLYPV (110 aa)). Positions 504-554 (QLLYPVSRFSNVKSLQHLCRFRIRQLVRIDHIPDLPLPKPLISYIRKFYYY) constitute an SOCS box domain.

In terms of assembly, substrate-recognition component of the ECS(SOCS7) complex, composed of SOCS7, CUL5, ELOB, ELOC and RNF7/RBX2. Interacts, via the third proline-rich region, with the second SH3 domain of the adapter protein NCK1. Also interacts with GRB2, INSR, PLCG1, SORBS3/vinexin, and phosphorylated STAT3 and STAT5. Interacts with SEPT6. Interacts with phosphorylated IRS4 and PIK3R1. In terms of tissue distribution, expressed in brain and leukocytes. Also in fetal lung fibroblasts and fetal brain.

Its subcellular location is the cytoplasm. It is found in the nucleus. The protein resides in the cell membrane. It functions in the pathway protein modification; protein ubiquitination. In terms of biological role, substrate-recognition component of a cullin-5-RING E3 ubiquitin-protein ligase complex (ECS complex, also named CRL5 complex), which mediates the ubiquitination and subsequent proteasomal degradation of target proteins, such as DAB1 and IRS1. Specifically recognizes and binds phosphorylated proteins via its SH2 domain, promoting their ubiquitination. The ECS(SOCS7) complex acts as a key regulator of reelin signaling by mediating ubiquitination and degradation of phosphorylated DAB1 in the cortical plate of the developing cerebral cortex, thereby regulating neuron positioning during cortex development. Functions in insulin signaling and glucose homeostasis through IRS1 ubiquitination and subsequent proteasomal degradation. Also inhibits prolactin, growth hormone and leptin signaling by preventing STAT3 and STAT5 activation, sequestering them in the cytoplasm and reducing their binding to DNA. This Homo sapiens (Human) protein is Suppressor of cytokine signaling 7.